The primary structure comprises 660 residues: Polycomb protein SCMH1 (660 aa).

MBT repeat units follow at residues 28 to 126 and 134 to 235; these read FTWD…LQPP and SSWP…LQPP. The disordered stretch occupies residues 233-345; sequence QPPGTKVVIP…EPDTSTVPQD (113 aa). Composition is skewed to basic residues over residues 273 to 284 and 305 to 320; these read RGRKPGKKRGRT and FPKK…RKPR. Positions 330 to 343 are enriched in low complexity; it reads PTTSTPEPDTSTVP. Residues 593-658 enclose the SAM domain; it reads WTVEDVMQFV…SYHIDRLKQG (66 aa).

The protein belongs to the SCM family. In terms of assembly, interacts with the SAM domain of PHC1 via its SAM domain in vitro. Associates with a PRC1-like complex. In terms of tissue distribution, strongly expressed in heart, muscle and pancreas. Weakly expressed in brain, placenta, lung, liver and kidney.

It is found in the nucleus. In terms of biological role, associates with Polycomb group (PcG) multiprotein complexes; the complex class is required to maintain the transcriptionally repressive state of some genes. This chain is Polycomb protein SCMH1, found in Homo sapiens (Human).